Consider the following 508-residue polypeptide: Photosystem II CP47 reaction center protein (508 aa).

A run of 6 helical transmembrane segments spans residues 21 to 36 (SVHI…WAGS), 101 to 115 (IVFS…IWHW), 140 to 156 (GIHL…FGAF), 203 to 218 (IAAG…FHLS), 237 to 252 (VLSS…AFVV), and 457 to 472 (TFAL…HGAR).

It belongs to the PsbB/PsbC family. PsbB subfamily. PSII is composed of 1 copy each of membrane proteins PsbA, PsbB, PsbC, PsbD, PsbE, PsbF, PsbH, PsbI, PsbJ, PsbK, PsbL, PsbM, PsbT, PsbX, PsbY, PsbZ, Psb30/Ycf12, at least 3 peripheral proteins of the oxygen-evolving complex and a large number of cofactors. It forms dimeric complexes. The cofactor is Binds multiple chlorophylls. PSII binds additional chlorophylls, carotenoids and specific lipids..

It is found in the plastid. The protein resides in the chloroplast thylakoid membrane. One of the components of the core complex of photosystem II (PSII). It binds chlorophyll and helps catalyze the primary light-induced photochemical processes of PSII. PSII is a light-driven water:plastoquinone oxidoreductase, using light energy to abstract electrons from H(2)O, generating O(2) and a proton gradient subsequently used for ATP formation. The protein is Photosystem II CP47 reaction center protein of Zea mays (Maize).